The sequence spans 285 residues: Complex I assembly factor TIMMDC1, mitochondrial (285 aa).

4 helical membrane passes run 80 to 100 (AALS…FIYA), 137 to 159 (RWSW…LTVY), 165 to 185 (LSHF…NLGL), and 188 to 208 (LVAG…LLMA).

This sequence belongs to the Tim17/Tim22/Tim23 family. As to quaternary structure, associates with the intermediate 315 kDa subcomplex of incompletely assembled complex I. Interacts with TMEM70.

Its subcellular location is the mitochondrion membrane. Functionally, chaperone protein involved in the assembly of the mitochondrial NADH:ubiquinone oxidoreductase complex (complex I). Participates in constructing the membrane arm of complex I. In Rattus norvegicus (Rat), this protein is Complex I assembly factor TIMMDC1, mitochondrial.